The chain runs to 232 residues: Dof zinc finger protein DOF4.3 (232 aa).

The Dof-type zinc-finger motif lies at 25–79; that stretch reads RVCARCDSDNTKFCYYNNYSEFQPRYFCKNCRRYWTHGGALRNVPIGGSSRAKRT. C27, C30, C52, and C55 together coordinate Zn(2+).

The protein resides in the nucleus. In terms of biological role, transcription factor that binds specifically to a 5'-AA[AG]G-3' consensus core sequence. In Arabidopsis thaliana (Mouse-ear cress), this protein is Dof zinc finger protein DOF4.3 (DOF4.3).